The primary structure comprises 122 residues: Large ribosomal subunit protein uL14 (122 aa).

This sequence belongs to the universal ribosomal protein uL14 family. As to quaternary structure, part of the 50S ribosomal subunit. Forms a cluster with proteins L3 and L19. In the 70S ribosome, L14 and L19 interact and together make contacts with the 16S rRNA in bridges B5 and B8.

In terms of biological role, binds to 23S rRNA. Forms part of two intersubunit bridges in the 70S ribosome. The chain is Large ribosomal subunit protein uL14 from Bartonella quintana (strain Toulouse) (Rochalimaea quintana).